The following is a 142-amino-acid chain: Putative regulator of rDNA transcription protein 16 (142 aa).

Transmembrane regions (helical) follow at residues 19–39 (ILLT…VMVA), 84–104 (FLLF…AIFL), and 111–131 (SIFI…GLCH).

It localises to the membrane. Identified in a screen for mutants with decreased levels of rDNA transcription. The polypeptide is Putative regulator of rDNA transcription protein 16 (RRT16) (Saccharomyces cerevisiae (strain ATCC 204508 / S288c) (Baker's yeast)).